Reading from the N-terminus, the 576-residue chain is Formate--tetrahydrofolate ligase 2 (576 aa).

69–76 serves as a coordination point for ATP; sequence TPLGEGKT.

The protein belongs to the formate--tetrahydrofolate ligase family.

It catalyses the reaction (6S)-5,6,7,8-tetrahydrofolate + formate + ATP = (6R)-10-formyltetrahydrofolate + ADP + phosphate. It functions in the pathway one-carbon metabolism; tetrahydrofolate interconversion. This chain is Formate--tetrahydrofolate ligase 2, found in Rubrobacter xylanophilus (strain DSM 9941 / JCM 11954 / NBRC 16129 / PRD-1).